A 365-amino-acid chain; its full sequence is Probable G-protein coupled receptor 142 (365 aa).

Over 1-66 (MHLNSNPNSY…WPESPERSPC (66 aa)) the chain is Extracellular. Residue asparagine 44 is glycosylated (N-linked (GlcNAc...) asparagine). The helical transmembrane segment at 67-87 (VAGIIPVIYYSVLLSLGLPVA) threads the bilayer. Topologically, residues 88–102 (LARLAARTRKPSYHY) are cytoplasmic. A helical transmembrane segment spans residues 103 to 123 (LLALTASDIVTQVIIVFVGFL). At 124-140 (LQGAVLARQVPQAVVRT) the chain is on the extracellular side. The chain crosses the membrane as a helical span at residues 141–161 (ANILEFAANHASVWIAVLFTV). The Cytoplasmic segment spans residues 162–185 (DRYNALCRPLRHRATSSPGRTHRA). A helical membrane pass occupies residues 186–206 (IAAVIGVTLLTGIPFYWWLDV). The Extracellular segment spans residues 207-224 (WRDADPPSTMDKLLKWAH). A helical transmembrane segment spans residues 225-245 (CLIVYFIPCNVFLVTNSAIIL). Topologically, residues 246–264 (RLRKRGQRGLRPLVSKSTA) are cytoplasmic. Residues 265–285 (ILLGVTSLFALLWAPRIIVML) traverse the membrane as a helical segment. Topologically, residues 286-304 (YHLYVAPVHRDWRVHLALD) are extracellular. The helical transmembrane segment at 305 to 325 (IANMLAMLNTEVNFGLYCFIS) threads the bilayer. At 326–365 (KTFRATVRQVICDVHMACALKSQPKQTVVELMLKSVGTEL) the chain is on the cytoplasmic side.

It belongs to the G-protein coupled receptor 1 family.

Its subcellular location is the cell membrane. In terms of biological role, orphan receptor. This is Probable G-protein coupled receptor 142 (Gpr142) from Mus musculus (Mouse).